The chain runs to 582 residues: MTSNALKVFISDLHGELDVFDFLADRQFGILHLLIRQQFSPELNETLCAAIEASAIRLCRAANASQAQLDRTSAVSKEILFTALFLMVVQQKAEDESLTIAIRRWGWLSTVHRALSGDAQLSCTPFSQLVEMLAQNIRTLSAQDFFALVQAFAKALFKKLSPELNIVGDIYDRGQDAFAIMERLRGLPNVAIQWGNHDVVWMGAASGNLACITVAVRICLRYGTLDMLHRDYGINLSRLERFAAKAYGDDDCAQFTPKGDLNAEEKLRIARMHKAISIIQFKLEGKLIARRPEYTMADRLLLDKINIANSTVTVGDAVHPLLDSNFPTLDVEQPYRLSEDERKVAEDLKQQFLASAKLTQHMDILFHRGGMQKKTGDWLLYHACVPVDEQGEFQPFALAPETTRGQSLFNFCELEMRRGYLNRMVINDRNESDIAWFLWCGPHSPLFGKARMTTFERYFVADKQTHKEGKNEYYNLRSNPEFLARVATELKCSSDQVRIVNGHVPVKYQSGERPVQANGKLFSIDGGFSMPYRSATGLAGFVLLEALGQIVLYRVIPNDKRYALEVEYQQILKPKAASVPAA.

Belongs to the FBPase class 3 family. Mn(2+) serves as cofactor.

It catalyses the reaction beta-D-fructose 1,6-bisphosphate + H2O = beta-D-fructose 6-phosphate + phosphate. The protein operates within carbohydrate biosynthesis; gluconeogenesis. The chain is Fructose-1,6-bisphosphatase class 3 from Saccharophagus degradans (strain 2-40 / ATCC 43961 / DSM 17024).